We begin with the raw amino-acid sequence, 437 residues long: UDP-N-acetylmuramate--L-alanine ligase (437 aa).

114–120 provides a ligand contact to ATP; the sequence is GTHGKTS.

Belongs to the MurCDEF family.

Its subcellular location is the cytoplasm. The catalysed reaction is UDP-N-acetyl-alpha-D-muramate + L-alanine + ATP = UDP-N-acetyl-alpha-D-muramoyl-L-alanine + ADP + phosphate + H(+). Its pathway is cell wall biogenesis; peptidoglycan biosynthesis. In terms of biological role, cell wall formation. This chain is UDP-N-acetylmuramate--L-alanine ligase, found in Lactobacillus helveticus (strain DPC 4571).